The sequence spans 282 residues: uncharacterized protein (282 aa).

A helical transmembrane segment spans residues 22–42; the sequence is YLFTLGSFVTMFFVLCISPVF.

It is found in the cell membrane. This is an uncharacterized protein from Bacillus anthracis.